We begin with the raw amino-acid sequence, 230 residues long: 2-C-methyl-D-erythritol 4-phosphate cytidylyltransferase (230 aa).

This sequence belongs to the IspD/TarI cytidylyltransferase family. IspD subfamily.

The enzyme catalyses 2-C-methyl-D-erythritol 4-phosphate + CTP + H(+) = 4-CDP-2-C-methyl-D-erythritol + diphosphate. It participates in isoprenoid biosynthesis; isopentenyl diphosphate biosynthesis via DXP pathway; isopentenyl diphosphate from 1-deoxy-D-xylulose 5-phosphate: step 2/6. Its function is as follows. Catalyzes the formation of 4-diphosphocytidyl-2-C-methyl-D-erythritol from CTP and 2-C-methyl-D-erythritol 4-phosphate (MEP). The sequence is that of 2-C-methyl-D-erythritol 4-phosphate cytidylyltransferase from Synechocystis sp. (strain ATCC 27184 / PCC 6803 / Kazusa).